We begin with the raw amino-acid sequence, 402 residues long: MTLNMKVESMQKFHTFEIPTVIKHGIGAIKHTGEEVAALGVSKALLVTDPGIYKAGVADPVIESLKEAGIEVVLFNKVEPNPPVRLVNEGSELYKKENCNGLVAVGGGSSMDTAKAIGVEATHEGSVLDYEAADGKKPLENRIPPLTTIPTTAGTGSEVTQWAVITDEEREFKFNTGGPLIAAHLTIIDPELHVSMPPHVTAMTGIDALAHAIECYTMKFAQPITDAVALMAIEYAAHYIKRAFADGEDLEARYGMAQAAMLAGLSYGSESAGAAHAMSQTLGGIIPVAHGQCVAAMMGPVMEYNWKGYPEKFARIAKAFGIDTSKMTTEEAAKASVNWMYDLVEDLEVPTLEEQGVSPDMIERLSKEAMKDPQTFGNPRDLNEKAYNWIYKRCFNLTPKTV.

The protein belongs to the iron-containing alcohol dehydrogenase family.

The catalysed reaction is choline + NAD(+) = betaine aldehyde + NADH + H(+). It participates in amine and polyamine biosynthesis; betaine biosynthesis via choline pathway; betaine aldehyde from choline (dehydrogenase route): step 1/1. Its function is as follows. Involved in the biosynthesis of the osmoprotectant glycine betaine from choline. In Bacillus subtilis (strain 168), this protein is Choline dehydrogenase.